The sequence spans 577 residues: Leucine-rich repeat protein soc-2 homolog (577 aa).

Composition is skewed to basic and acidic residues over residues 1-10 (MRRTKGRTDS) and 33-48 (STAH…EAKK). Residues 1–71 (MRRTKGRTDS…PTVKKRSTPS (71 aa)) form a disordered region. 20 LRR repeats span residues 87–109 (GATR…KELT), 110–131 (SLRE…VGLL), 133–155 (NLET…VKLT), 156–177 (KLKV…IYKL), 179–201 (TLTT…GNLK), 202–223 (LLER…IGQL), 225–246 (HLVT…IGNC), 248–269 (HMTS…IGRL), 271–292 (AMTR…LANC), 294–315 (GIDE…LLSS), 318–339 (NLTS…PPKQ), 342–363 (QVNT…VFNK), 366–387 (YLSK…FGSW), 389–410 (SLVE…IQWL), 412–434 (NLEV…GALR), 435–456 (KLRV…IEYL), 458–479 (SLER…IGYL), 481–502 (SVTY…IGNM), 504–526 (SLEQ…LVLC), and 528–549 (SLQI…IVAG).

It belongs to the SHOC2 family.

Its function is as follows. Acts as a Ras effector and participates in MAPK pathway activation. Probably acts as a scaffolding protein in a protein phosphatase complex that specifically dephosphorylates Raf kinase and stimulate Raf activity at specialized signaling complexes upon Ras activation. The chain is Leucine-rich repeat protein soc-2 homolog from Nematostella vectensis (Starlet sea anemone).